The chain runs to 462 residues: Argininosuccinate lyase (462 aa).

The protein belongs to the lyase 1 family. Argininosuccinate lyase subfamily.

It is found in the cytoplasm. It carries out the reaction 2-(N(omega)-L-arginino)succinate = fumarate + L-arginine. It participates in amino-acid biosynthesis; L-arginine biosynthesis; L-arginine from L-ornithine and carbamoyl phosphate: step 3/3. This Hydrogenovibrio crunogenus (strain DSM 25203 / XCL-2) (Thiomicrospira crunogena) protein is Argininosuccinate lyase.